Reading from the N-terminus, the 852-residue chain is Disks large homolog 2 (852 aa).

2 S-palmitoyl cysteine lipidation sites follow: cysteine 5 and cysteine 7. A Phosphoserine modification is found at serine 28. Tyrosine 58 is modified (phosphotyrosine). Serine 65 carries the post-translational modification Phosphoserine. 2 consecutive PDZ domains span residues 98–184 (EITL…VRRR) and 193–279 (EIKL…VGKP). 6 positions are modified to phosphoserine: serine 307, serine 328, serine 360, serine 365, serine 406, and serine 414. Residues 421-501 (KVVLHKGSTG…QTVTIIAQYQ (81 aa)) form the PDZ 3 domain. Tyrosine 505 is modified (phosphotyrosine). 3 positions are modified to phosphoserine: serine 528, serine 530, and serine 553. In terms of domain architecture, SH3 spans 536-606 (KRSLYVRAMF…PSKRRVERKE (71 aa)). The Guanylate kinase-like domain occupies 662-837 (TRPVIILGPM…IYNQCKLVIE (176 aa)). 2 positions are modified to phosphotyrosine: tyrosine 732 and tyrosine 737.

This sequence belongs to the MAGUK family. As to quaternary structure, interacts through its PDZ domains with NETO1. Interacts with NOS1/nNOS through second PDZ domain. Interacts with KCNJ2/Kir2.1 (via C-terminus) through one of its PDZ domains. Interacts with KCNJ4. Interacts with FRMPD4 (via C-terminus). Interacts with LRFN1. Interacts with LRFN2 and LRFN4. Interacts with FASLG. Interacts with ADAM22. Interacts with DGKI (via PDZ-binding motif). Palmitoylation of isoform 1 and isoform 2 is not required for targeting to postsynaptic density. Detected in juxtaparanodal zones in the central nervous system and at nerve terminal plexuses of basket cells in the cerebellum (at protein level). Brain. High levels in cerebellar Purkinje cells. Expressed in pyramidal cells of the Ammons's horn and granular cells of the dentate gyrus in the hippocampus as well as cerebral cortex and striatum. High levels in dorsal horn of spinal cord.

It is found in the cell membrane. It localises to the postsynaptic density. Its subcellular location is the synapse. The protein resides in the cell projection. The protein localises to the axon. It is found in the membrane. It localises to the perikaryon. In terms of biological role, required for perception of chronic pain through NMDA receptor signaling. Regulates surface expression of NMDA receptors in dorsal horn neurons of the spinal cord. Interacts with the cytoplasmic tail of NMDA receptor subunits as well as inward rectifying potassium channels. Involved in regulation of synaptic stability at cholinergic synapses. Part of the postsynaptic protein scaffold of excitatory synapses. The polypeptide is Disks large homolog 2 (Dlg2) (Rattus norvegicus (Rat)).